Reading from the N-terminus, the 957-residue chain is Glycine dehydrogenase (decarboxylating) (957 aa).

Lys-708 is subject to N6-(pyridoxal phosphate)lysine.

It belongs to the GcvP family. The glycine cleavage system is composed of four proteins: P, T, L and H. Requires pyridoxal 5'-phosphate as cofactor.

The enzyme catalyses N(6)-[(R)-lipoyl]-L-lysyl-[glycine-cleavage complex H protein] + glycine + H(+) = N(6)-[(R)-S(8)-aminomethyldihydrolipoyl]-L-lysyl-[glycine-cleavage complex H protein] + CO2. Functionally, the glycine cleavage system catalyzes the degradation of glycine. The P protein binds the alpha-amino group of glycine through its pyridoxal phosphate cofactor; CO(2) is released and the remaining methylamine moiety is then transferred to the lipoamide cofactor of the H protein. This chain is Glycine dehydrogenase (decarboxylating), found in Escherichia coli O8 (strain IAI1).